The sequence spans 145 residues: MNVMNITDIKKYIPHRYPFLLIDRVIKIEKDKSLVAIKNVTVNEPFFTGHFPVRPVMPGVLIIESLAQAAGILIVKSLNLPEGHKDIYFFAGVDNARFKRVVEPGDQLTLEVKVLKVHRGLWKFEGKATVDDQLACKAELMTIKG.

His50 is an active-site residue.

This sequence belongs to the thioester dehydratase family. FabZ subfamily.

Its subcellular location is the cytoplasm. It catalyses the reaction a (3R)-hydroxyacyl-[ACP] = a (2E)-enoyl-[ACP] + H2O. Functionally, involved in unsaturated fatty acids biosynthesis. Catalyzes the dehydration of short chain beta-hydroxyacyl-ACPs and long chain saturated and unsaturated beta-hydroxyacyl-ACPs. This chain is 3-hydroxyacyl-[acyl-carrier-protein] dehydratase FabZ, found in Coxiella burnetii (strain CbuK_Q154) (Coxiella burnetii (strain Q154)).